A 160-amino-acid polypeptide reads, in one-letter code: Cyclic pyranopterin monophosphate synthase (160 aa).

Residues 75-77 and 116-117 contribute to the substrate site; these read MCH and ME. Asp131 is an active-site residue.

The protein belongs to the MoaC family. In terms of assembly, homohexamer; trimer of dimers.

The catalysed reaction is (8S)-3',8-cyclo-7,8-dihydroguanosine 5'-triphosphate = cyclic pyranopterin phosphate + diphosphate. The protein operates within cofactor biosynthesis; molybdopterin biosynthesis. Catalyzes the conversion of (8S)-3',8-cyclo-7,8-dihydroguanosine 5'-triphosphate to cyclic pyranopterin monophosphate (cPMP). This chain is Cyclic pyranopterin monophosphate synthase, found in Staphylococcus haemolyticus (strain JCSC1435).